We begin with the raw amino-acid sequence, 115 residues long: Large ribosomal subunit protein uL22c (115 aa).

Belongs to the universal ribosomal protein uL22 family. As to quaternary structure, part of the 50S ribosomal subunit.

It localises to the plastid. The protein resides in the chloroplast. Its function is as follows. This protein binds specifically to 23S rRNA. In terms of biological role, the globular domain of the protein is located near the polypeptide exit tunnel on the outside of the subunit, while an extended beta-hairpin is found that lines the wall of the exit tunnel in the center of the 70S ribosome. This is Large ribosomal subunit protein uL22c (rpl22) from Thalassiosira pseudonana (Marine diatom).